The following is a 117-amino-acid chain: Large ribosomal subunit protein bL20c (117 aa).

Belongs to the bacterial ribosomal protein bL20 family.

It is found in the plastid. Its subcellular location is the chloroplast. Functionally, binds directly to 23S ribosomal RNA and is necessary for the in vitro assembly process of the 50S ribosomal subunit. It is not involved in the protein synthesizing functions of that subunit. This is Large ribosomal subunit protein bL20c from Barbarea verna (Land cress).